We begin with the raw amino-acid sequence, 149 residues long: Transcription antitermination protein NusB (149 aa).

This sequence belongs to the NusB family.

Involved in transcription antitermination. Required for transcription of ribosomal RNA (rRNA) genes. Binds specifically to the boxA antiterminator sequence of the ribosomal RNA (rrn) operons. The protein is Transcription antitermination protein NusB of Caulobacter vibrioides (strain ATCC 19089 / CIP 103742 / CB 15) (Caulobacter crescentus).